We begin with the raw amino-acid sequence, 257 residues long: Snake venom serine protease rhinocerase 4 (257 aa).

Positions 1 to 17 (VLIRVLANLLVLQLSYA) are cleaved as a signal peptide. Positions 18-23 (QKSSEL) are excised as a propeptide. The Peptidase S1 domain occupies 24–248 (VIGGAECNIN…YTDWIRSIIG (225 aa)). Disulfide bonds link cysteine 30/cysteine 162, cysteine 49/cysteine 65, cysteine 97/cysteine 255, cysteine 141/cysteine 209, cysteine 173/cysteine 188, and cysteine 199/cysteine 224. Residue asparagine 43 is glycosylated (N-linked (GlcNAc...) asparagine). Histidine 64 (charge relay system) is an active-site residue. 2 N-linked (GlcNAc...) asparagine glycosylation sites follow: asparagine 78 and asparagine 100. Aspartate 109 acts as the Charge relay system in catalysis. Serine 203 functions as the Charge relay system in the catalytic mechanism. Asparagine 250 is a glycosylation site (N-linked (GlcNAc...) asparagine).

The protein belongs to the peptidase S1 family. Snake venom subfamily. Expressed by the venom gland.

The protein localises to the secreted. In terms of biological role, snake venom serine protease that may act in the hemostasis system of the prey. The chain is Snake venom serine protease rhinocerase 4 from Bitis rhinoceros (West African gaboon viper).